The following is a 478-amino-acid chain: Cytochrome c-552 (478 aa).

A signal peptide spans methionine 1–alanine 26. Histidine 94 serves as a coordination point for heme c. Positions 122, 125, and 126 each coordinate heme. 6 residues coordinate heme c: cysteine 160, cysteine 163, histidine 164, cysteine 209, cysteine 212, and histidine 213. Positions 215, 216, 261, and 263 each coordinate Ca(2+). Position 216 (tyrosine 216) interacts with substrate. Substrate is bound at residue histidine 264. Histidine 275, cysteine 282, cysteine 285, histidine 286, histidine 301, cysteine 314, cysteine 317, histidine 318, and histidine 393 together coordinate heme c.

The protein belongs to the cytochrome c-552 family. The cofactor is Ca(2+). It depends on heme c as a cofactor.

The protein localises to the periplasm. It carries out the reaction 6 Fe(III)-[cytochrome c] + NH4(+) + 2 H2O = 6 Fe(II)-[cytochrome c] + nitrite + 8 H(+). It participates in nitrogen metabolism; nitrate reduction (assimilation). Its function is as follows. Catalyzes the reduction of nitrite to ammonia, consuming six electrons in the process. The chain is Cytochrome c-552 from Escherichia coli O157:H7 (strain EC4115 / EHEC).